A 758-amino-acid polypeptide reads, in one-letter code: 5-methyltetrahydropteroyltriglutamate--homocysteine methyltransferase (758 aa).

5-methyltetrahydropteroyltri-L-glutamate-binding positions include 16–19 and Lys112; that span reads RELK. L-homocysteine-binding positions include 433-435 and Glu486; that span reads IGS. Residues 433 to 435 and Glu486 contribute to the L-methionine site; that span reads IGS. 5-methyltetrahydropteroyltri-L-glutamate-binding positions include 517 to 518 and Trp563; that span reads RC. L-homocysteine is bound at residue Asp601. Asp601 contributes to the L-methionine binding site. Glu607 is a 5-methyltetrahydropteroyltri-L-glutamate binding site. The Zn(2+) site is built by His643, Cys645, and Glu667. His696 acts as the Proton donor in catalysis. Cys728 is a binding site for Zn(2+).

The protein belongs to the vitamin-B12 independent methionine synthase family. It depends on Zn(2+) as a cofactor.

The catalysed reaction is 5-methyltetrahydropteroyltri-L-glutamate + L-homocysteine = tetrahydropteroyltri-L-glutamate + L-methionine. It functions in the pathway amino-acid biosynthesis; L-methionine biosynthesis via de novo pathway; L-methionine from L-homocysteine (MetE route): step 1/1. Catalyzes the transfer of a methyl group from 5-methyltetrahydrofolate to homocysteine resulting in methionine formation. The protein is 5-methyltetrahydropteroyltriglutamate--homocysteine methyltransferase of Neisseria gonorrhoeae (strain ATCC 700825 / FA 1090).